We begin with the raw amino-acid sequence, 645 residues long: Phosphomethylpyrimidine synthase (645 aa).

Substrate contacts are provided by residues Asn-235, Met-264, Tyr-293, His-329, 349-351 (SRG), 390-393 (DGLR), and Glu-429. His-433 contributes to the Zn(2+) binding site. Residue Tyr-456 participates in substrate binding. A Zn(2+)-binding site is contributed by His-497. Cys-577, Cys-580, and Cys-585 together coordinate [4Fe-4S] cluster.

The protein belongs to the ThiC family. Homodimer. Requires [4Fe-4S] cluster as cofactor.

It carries out the reaction 5-amino-1-(5-phospho-beta-D-ribosyl)imidazole + S-adenosyl-L-methionine = 4-amino-2-methyl-5-(phosphooxymethyl)pyrimidine + CO + 5'-deoxyadenosine + formate + L-methionine + 3 H(+). It participates in cofactor biosynthesis; thiamine diphosphate biosynthesis. In terms of biological role, catalyzes the synthesis of the hydroxymethylpyrimidine phosphate (HMP-P) moiety of thiamine from aminoimidazole ribotide (AIR) in a radical S-adenosyl-L-methionine (SAM)-dependent reaction. The sequence is that of Phosphomethylpyrimidine synthase from Vibrio cholerae serotype O1 (strain ATCC 39541 / Classical Ogawa 395 / O395).